We begin with the raw amino-acid sequence, 440 residues long: ATP-dependent protease ATPase subunit HslU (440 aa).

ATP contacts are provided by residues Ile-18, 60-65 (GVGKTE), Asp-253, Glu-318, and Arg-390.

This sequence belongs to the ClpX chaperone family. HslU subfamily. In terms of assembly, a double ring-shaped homohexamer of HslV is capped on each side by a ring-shaped HslU homohexamer. The assembly of the HslU/HslV complex is dependent on binding of ATP.

The protein localises to the cytoplasm. In terms of biological role, ATPase subunit of a proteasome-like degradation complex; this subunit has chaperone activity. The binding of ATP and its subsequent hydrolysis by HslU are essential for unfolding of protein substrates subsequently hydrolyzed by HslV. HslU recognizes the N-terminal part of its protein substrates and unfolds these before they are guided to HslV for hydrolysis. The chain is ATP-dependent protease ATPase subunit HslU from Shewanella oneidensis (strain ATCC 700550 / JCM 31522 / CIP 106686 / LMG 19005 / NCIMB 14063 / MR-1).